The chain runs to 438 residues: Probable imidazolonepropionase (438 aa).

The 4-imidazolone-5-propanoate site is built by Y159 and H192. Position 159 (Y159) interacts with N-formimidoyl-L-glutamate. Residue H260 coordinates Fe(3+). H260 is a binding site for Zn(2+). E263 provides a ligand contact to 4-imidazolone-5-propanoate. Fe(3+) is bound at residue D334. D334 is a binding site for Zn(2+). Position 336 (N336) interacts with N-formimidoyl-L-glutamate.

The protein belongs to the metallo-dependent hydrolases superfamily. HutI family. The cofactor is Zn(2+). Requires Fe(3+) as cofactor.

The enzyme catalyses 4-imidazolone-5-propanoate + H2O = N-formimidoyl-L-glutamate. It functions in the pathway amino-acid degradation; L-histidine degradation into L-glutamate; N-formimidoyl-L-glutamate from L-histidine: step 3/3. This Xenopus laevis (African clawed frog) protein is Probable imidazolonepropionase (amdhd1).